Here is a 95-residue protein sequence, read N- to C-terminus: Co-chaperonin GroES (95 aa).

It belongs to the GroES chaperonin family. Heptamer of 7 subunits arranged in a ring. Interacts with the chaperonin GroEL.

It is found in the cytoplasm. In terms of biological role, together with the chaperonin GroEL, plays an essential role in assisting protein folding. The GroEL-GroES system forms a nano-cage that allows encapsulation of the non-native substrate proteins and provides a physical environment optimized to promote and accelerate protein folding. GroES binds to the apical surface of the GroEL ring, thereby capping the opening of the GroEL channel. This Desulfatibacillum aliphaticivorans protein is Co-chaperonin GroES.